A 590-amino-acid polypeptide reads, in one-letter code: Methionine--tRNA ligase, mitochondrial (590 aa).

The transit peptide at 1–26 (MRTRFLFLTSGCKAVPELHKIVLANA) directs the protein to the mitochondrion. Residues 51–61 (FYVNASPHLGH) carry the 'HIGH' region motif. Positions 342–346 (KMSKS) match the 'KMSKS' region motif. K345 is an ATP binding site. A disordered region spans residues 570–590 (LESQRADQQKNRKMEKGSNLK). The span at 571 to 590 (ESQRADQQKNRKMEKGSNLK) shows a compositional bias: basic and acidic residues.

Belongs to the class-I aminoacyl-tRNA synthetase family.

It is found in the mitochondrion matrix. It carries out the reaction tRNA(Met) + L-methionine + ATP = L-methionyl-tRNA(Met) + AMP + diphosphate. This chain is Methionine--tRNA ligase, mitochondrial (mars2), found in Takifugu rubripes (Japanese pufferfish).